Here is a 184-residue protein sequence, read N- to C-terminus: Ribosome-recycling factor (184 aa).

Belongs to the RRF family.

The protein resides in the cytoplasm. Responsible for the release of ribosomes from messenger RNA at the termination of protein biosynthesis. May increase the efficiency of translation by recycling ribosomes from one round of translation to another. The polypeptide is Ribosome-recycling factor (Stenotrophomonas maltophilia (strain R551-3)).